The primary structure comprises 453 residues: MTTDTIVAQATAPGRGGVGIIRISGDKATDVAMAVLGHLPKTRYADYCDFKNATGQVIDQGIALFFKGPNSFTGEDVLELQGHGGQIVLDMLIKRVLEVEGIRIAKPGEFSEQAFMNDKLDLTQAEAIADLIDATSEQAAKSALQSLQGEFSKEVHELVDQVTNLRLYVEAAIDFPDEEVDFLSDGKIANALYKIIDKLSTVQASAKQGSIIREGMKVVIAGRPNAGKSSLLNALAGKESAIVTEIAGTTRDVLREHIHLDGMPLHIIDTAGLRDTTDTVEQIGIERAWNEINSADRVLFMVDGTTTDAVDPHDIWPDFINRLPANLGVTVIRNKADLTGENLDMTEEKGYSVYRISAKTGLGVDELKLHLKSLMGYQSNLEGGFIARRRHLEALDVAASHLQLGKEQLEVYLAGELLAEELRMAQLALSEITGRFTSDDLLGKIFSSFCIGK.

(6S)-5-formyl-5,6,7,8-tetrahydrofolate is bound by residues Arg-22, Glu-79, and Lys-119. The TrmE-type G domain maps to 215–376 (GMKVVIAGRP…LKLHLKSLMG (162 aa)). Asn-225 contributes to the K(+) binding site. GTP is bound by residues 225 to 230 (NAGKSS), 244 to 250 (TEIAGTT), 269 to 272 (DTAG), and 334 to 337 (NKAD). Position 229 (Ser-229) interacts with Mg(2+). K(+) contacts are provided by Thr-244, Ile-246, and Thr-249. Thr-250 contributes to the Mg(2+) binding site. Position 453 (Lys-453) interacts with (6S)-5-formyl-5,6,7,8-tetrahydrofolate.

Belongs to the TRAFAC class TrmE-Era-EngA-EngB-Septin-like GTPase superfamily. TrmE GTPase family. In terms of assembly, homodimer. Heterotetramer of two MnmE and two MnmG subunits. K(+) serves as cofactor.

It is found in the cytoplasm. Exhibits a very high intrinsic GTPase hydrolysis rate. Involved in the addition of a carboxymethylaminomethyl (cmnm) group at the wobble position (U34) of certain tRNAs, forming tRNA-cmnm(5)s(2)U34. The protein is tRNA modification GTPase MnmE of Shewanella putrefaciens (strain CN-32 / ATCC BAA-453).